A 382-amino-acid polypeptide reads, in one-letter code: MAKPVQIEVWNPNGKYRVVSTKPMPGTRWINLLIEQDCRVEICTEKKTILSVEDILALIGDKCDGVIGQLTEDWGEVLFSALSRAGGKAFSNMAVGYNNVDVNAANKYGVAVGNTPGVLTETTAELAASLSLAAARRIVEADEFMRAGRYDGWLPNLFVGNLLKGQTVGVIGAGRIGSAYARMMVEGFKMNLIYFDLYQSTRLEKFVTAYGEFLKANGEAPVTWRRASSMDEVLREADVISLHPVLDKTTFHLVNKESLKAMKKDAILINCSRGPVIDEAALVDHLRDNPMFRVGLDVFEDEPYMKPGLADMKNAIIVPHIASASKWTREGMATLAALNVLGKIKGYPVWSDPNRVEPFLDENVSPPAASPSIVNAKALGNA.

NAD(+) contacts are provided by residues 175–176 (RI), 271–273 (CSR), and aspartate 297. Residue arginine 273 is part of the active site. Glutamate 302 is a catalytic residue. The Proton donor role is filled by histidine 320. 320 to 323 (HIAS) lines the NAD(+) pocket.

This sequence belongs to the D-isomer specific 2-hydroxyacid dehydrogenase family.

It localises to the peroxisome. It carries out the reaction (R)-glycerate + NAD(+) = 3-hydroxypyruvate + NADH + H(+). It participates in photosynthesis; photorespiration; 3-phospho-D-glycerate from glycine: step 3/4. The chain is Glycerate dehydrogenase (HPR-A) from Cucumis sativus (Cucumber).